The chain runs to 98 residues: uncharacterized protein (98 aa).

2 helical membrane passes run 14-34 (FLVILCMVAFLAGCTQSPVTA) and 41-61 (MTGAQPVLIWLLISSIIASII).

It is found in the cell membrane. This is an uncharacterized protein from Haemophilus influenzae (strain ATCC 51907 / DSM 11121 / KW20 / Rd).